A 441-amino-acid polypeptide reads, in one-letter code: DNA double-strand break repair protein Mre11 (441 aa).

The Mn(2+) site is built by Asp-9, His-11, Asp-50, and Asn-85. His-86 serves as the catalytic Proton donor. Mn(2+) contacts are provided by His-150, Asp-181, and His-183. A disordered region spans residues 360–441; sequence ESLLSDDPDA…SRDSSLGDFA (82 aa). 2 stretches are compositionally biased toward acidic residues: residues 379-403 and 411-425; these read AEAE…EDTA and TDTD…DSET.

The protein belongs to the MRE11/RAD32 family. In terms of assembly, homodimer. Forms a heterotetramer composed of two Mre11 subunits and two Rad50 subunits. Mn(2+) serves as cofactor.

Its activity is regulated as follows. Nuclease activity is regulated by Rad50. Functionally, part of the Rad50/Mre11 complex, which is involved in the early steps of DNA double-strand break (DSB) repair. Mre11 binds to DSB ends and has both double-stranded 3'-5' exonuclease activity and single-stranded endonuclease activity. In polyploid organisms, the Rad50/Mre11 complex appears to restrain the repair of double-strand breaks by homologous recombination, allowing another pathway to act as the primary mode of repair. In Haloferax volcanii (strain ATCC 29605 / DSM 3757 / JCM 8879 / NBRC 14742 / NCIMB 2012 / VKM B-1768 / DS2) (Halobacterium volcanii), this protein is DNA double-strand break repair protein Mre11.